We begin with the raw amino-acid sequence, 245 residues long: Probable 2-phosphosulfolactate phosphatase (245 aa).

This sequence belongs to the ComB family. Requires Mg(2+) as cofactor.

The catalysed reaction is (2R)-O-phospho-3-sulfolactate + H2O = (2R)-3-sulfolactate + phosphate. The sequence is that of Probable 2-phosphosulfolactate phosphatase from Trichormus variabilis (strain ATCC 29413 / PCC 7937) (Anabaena variabilis).